Here is a 204-residue protein sequence, read N- to C-terminus: N-(5'-phosphoribosyl)anthranilate isomerase (204 aa).

This sequence belongs to the TrpF family.

The enzyme catalyses N-(5-phospho-beta-D-ribosyl)anthranilate = 1-(2-carboxyphenylamino)-1-deoxy-D-ribulose 5-phosphate. It participates in amino-acid biosynthesis; L-tryptophan biosynthesis; L-tryptophan from chorismate: step 3/5. The sequence is that of N-(5'-phosphoribosyl)anthranilate isomerase from Bacillus cereus (strain AH187).